The sequence spans 418 residues: Glutamyl-tRNA reductase (418 aa).

Residues 49–52 (TCNR), serine 109, 114–116 (EPQ), and glutamine 120 contribute to the substrate site. Residue cysteine 50 is the Nucleophile of the active site. 189–194 (GAGETI) serves as a coordination point for NADP(+).

Belongs to the glutamyl-tRNA reductase family. As to quaternary structure, homodimer.

The catalysed reaction is (S)-4-amino-5-oxopentanoate + tRNA(Glu) + NADP(+) = L-glutamyl-tRNA(Glu) + NADPH + H(+). It functions in the pathway porphyrin-containing compound metabolism; protoporphyrin-IX biosynthesis; 5-aminolevulinate from L-glutamyl-tRNA(Glu): step 1/2. Functionally, catalyzes the NADPH-dependent reduction of glutamyl-tRNA(Glu) to glutamate 1-semialdehyde (GSA). The chain is Glutamyl-tRNA reductase from Citrobacter koseri (strain ATCC BAA-895 / CDC 4225-83 / SGSC4696).